The primary structure comprises 586 residues: A-type ATP synthase subunit A (586 aa).

ATP is bound at residue 238 to 245 (GPFGSGKT).

Belongs to the ATPase alpha/beta chains family. In terms of assembly, has multiple subunits with at least A(3), B(3), C, D, E, F, H, I and proteolipid K(x).

The protein resides in the cell membrane. The enzyme catalyses ATP + H2O + 4 H(+)(in) = ADP + phosphate + 5 H(+)(out). Its function is as follows. Component of the A-type ATP synthase that produces ATP from ADP in the presence of a proton gradient across the membrane. The A chain is the catalytic subunit. In Haloferax volcanii (strain ATCC 29605 / DSM 3757 / JCM 8879 / NBRC 14742 / NCIMB 2012 / VKM B-1768 / DS2) (Halobacterium volcanii), this protein is A-type ATP synthase subunit A.